The following is a 645-amino-acid chain: Beta-galactosidase BgaA (645 aa).

Arg-102 provides a ligand contact to substrate. Cys-106 lines the Zn(2+) pocket. Residue Asn-140 participates in substrate binding. Glu-141 acts as the Proton donor in catalysis. Residues Cys-150, Cys-152, and Cys-155 each coordinate Zn(2+). Catalysis depends on Glu-312, which acts as the Nucleophile. Substrate-binding positions include Trp-320 and 360-363 (EQMH).

Belongs to the glycosyl hydrolase 42 family.

It catalyses the reaction Hydrolysis of terminal non-reducing beta-D-galactose residues in beta-D-galactosides.. Functionally, hydrolyzes chromogen 5-bromo-4-chloro-3-indolyl-beta-D-galactopyranoside (X-Gal) and p-nitrophenyl-beta-D-galactoside (pNPGal). The polypeptide is Beta-galactosidase BgaA (Thermus sp).